The primary structure comprises 209 residues: DNA ADP-ribosyl transferase (209 aa).

The region spanning 9 to 209 (TPIYHITHID…RVCIRKDWYY (201 aa)) is the DarT domain. NAD(+) contacts are provided by residues 13–15 (HIT), Gly22, and Leu30. Positions 35 to 53 (SPPKQRSIAYAHIQERRNR) are NAD(+)-binding element. A DNA-binding region spans residues 44 to 50 (YAHIQER). Residue Arg51 participates in NAD(+) binding. The active-site Proton acceptor is Arg51. 3 DNA-binding regions span residues 75–80 (RSPMLY), 145–148 (SYWA), and 154–158 (REKKQ). Positions 116–160 (TDRHGVLSHARFFRQLEELAQLDWEAIQASYWADPPELREKKQAE) are ADP-ribosylating turn-turn loop. Glu160 is an active-site residue.

Belongs to the DarT ADP-ribosyltransferase family. As to quaternary structure, interacts with cognate antitoxin DarG (via C-terminus); this heterodimeric complex neutralizes the toxic effect of DarT by preventing ssDNA binding to DarT and consequently inactivating the toxin by direct protein-protein interactions.

It catalyses the reaction a thymidine in DNA + NAD(+) = an N-(ADP-alpha-D-ribosyl)-thymidine in DNA + nicotinamide + H(+). Its function is as follows. Toxic component of the hybrid type II/IV toxin-antitoxin (TA) system DarTG, which plays a crucial role in controlling bacterial growth and bacteriophage infection. In case of phage infection, DarT toxin ADP-ribosylates DNA, which inhibits both viral DNA and RNA synthesis and leads to abortive infection. ADP-ribosylates ssDNA on the second thymidine of the consensus sequence 5'-TNTC-3'; the protein does not auto-modify. Arg-51 is highly flexible, allowing it to assume multiple positions in the crystal structures. Its toxic effect is neutralized by cognate antitoxin DarG. The protein is DNA ADP-ribosyl transferase of Thermus sp. (strain 2.9).